The chain runs to 412 residues: Argininosuccinate synthase (412 aa).

ATP-binding positions include 10 to 18 and Ala-36; that span reads AYSGGLDTS. L-citrulline is bound by residues Tyr-87 and Ser-92. Residue 115–123 coordinates ATP; that stretch reads SHGATGKGN. Thr-119, Asn-123, and Asp-124 together coordinate L-aspartate. L-citrulline is bound at residue Asn-123. L-citrulline-binding residues include Arg-127, Ser-180, Ser-189, Glu-270, and Tyr-282.

It belongs to the argininosuccinate synthase family. In terms of assembly, homotetramer.

The catalysed reaction is L-citrulline + L-aspartate + ATP = 2-(N(omega)-L-arginino)succinate + AMP + diphosphate + H(+). The protein operates within amino-acid biosynthesis; L-arginine biosynthesis; L-arginine from L-ornithine and carbamoyl phosphate: step 2/3. It participates in nitrogen metabolism; urea cycle; (N(omega)-L-arginino)succinate from L-aspartate and L-citrulline: step 1/1. The protein is Argininosuccinate synthase of Aedes aegypti (Yellowfever mosquito).